Consider the following 472-residue polypeptide: Transmembrane protein 8B (472 aa).

The segment covering 1-10 has biased composition (low complexity); it reads MNMPQSLGTQ. Residues 1-24 are disordered; sequence MNMPQSLGTQPLPPEPPSLGTPIE. Topologically, residues 1–233 are extracellular; it reads MNMPQSLGTQ…ADALTYGFQL (233 aa). Asparagine 100 carries N-linked (GlcNAc...) asparagine glycosylation. The 40-residue stretch at 182-221 folds into the EGF-like domain; the sequence is FLSPCVDDCGPYGQCKLLRTHNYLYAACECKAGWRGWGCT. Intrachain disulfides connect cysteine 186/cysteine 196, cysteine 190/cysteine 209, and cysteine 211/cysteine 220. Residues 234–254 traverse the membrane as a helical segment; that stretch reads LSTLLLCLSNLMFLPPVVLAI. Over 255–257 the chain is Cytoplasmic; it reads RSR. The helical transmembrane segment at 258–277 threads the bilayer; the sequence is YVLEAAVYTFTMFFSTFYHA. The Extracellular portion of the chain corresponds to 278–292; that stretch reads CDQPGIVVFCIMDYD. Residues 293 to 313 traverse the membrane as a helical segment; it reads VLQFCDFLGSLMSVWVTVIAM. Topologically, residues 314 to 315 are cytoplasmic; sequence AR. Residues 316–336 traverse the membrane as a helical segment; that stretch reads LQPVIKQVLYLLGAMLLSMAL. Over 337–342 the chain is Extracellular; it reads QLDRHG. The chain crosses the membrane as a helical span at residues 343 to 363; sequence LWNLLGPSLFALGILATAWTV. Residues 364–379 are Cytoplasmic-facing; that stretch reads RSVRRRHCYPPTWRRW. The chain crosses the membrane as a helical span at residues 380-400; sequence LFYLCPGSLIAGSAVLLYAFV. Residues 401–405 are Extracellular-facing; it reads ETRDN. The chain crosses the membrane as a helical span at residues 406–426; sequence YFYIHSIWHMLIAGSVGFLLP. The Cytoplasmic portion of the chain corresponds to 427-472; it reads PRAKTDRRVPSGARARGCGYQLCINEQEELGLVGPGGTTVSSICVS.

The protein belongs to the TMEM8 family. As to quaternary structure, may interact with EZR. Post-translationally, N-glycosylated.

It is found in the cell membrane. The protein localises to the cytoplasm. It localises to the nucleus. Its subcellular location is the mitochondrion. The protein resides in the endoplasmic reticulum. Functionally, may function as a regulator of the EGFR pathway. Probable tumor suppressor which may function in cell growth, proliferation and adhesion. This Mus musculus (Mouse) protein is Transmembrane protein 8B (Tmem8b).